The chain runs to 659 residues: UvrABC system protein B (659 aa).

The Helicase ATP-binding domain occupies 25-182 (QSIENGNRGQ…KKLIEIQYER (158 aa)). 38–45 (GVTGSGKT) lines the ATP pocket. Residues 91 to 114 (YYDYYQPEAYVPQTDTFIEKDASI) carry the Beta-hairpin motif. Residues 429–582 (QIDDLYGEIQ…QMEYNEEHNI (154 aa)) form the Helicase C-terminal domain. The UVR domain occupies 622 to 657 (EKLIEQYEEEMKEAAKNLQFERAAELRDIIKDLKEN).

This sequence belongs to the UvrB family. Forms a heterotetramer with UvrA during the search for lesions. Interacts with UvrC in an incision complex.

It localises to the cytoplasm. Functionally, the UvrABC repair system catalyzes the recognition and processing of DNA lesions. A damage recognition complex composed of 2 UvrA and 2 UvrB subunits scans DNA for abnormalities. Upon binding of the UvrA(2)B(2) complex to a putative damaged site, the DNA wraps around one UvrB monomer. DNA wrap is dependent on ATP binding by UvrB and probably causes local melting of the DNA helix, facilitating insertion of UvrB beta-hairpin between the DNA strands. Then UvrB probes one DNA strand for the presence of a lesion. If a lesion is found the UvrA subunits dissociate and the UvrB-DNA preincision complex is formed. This complex is subsequently bound by UvrC and the second UvrB is released. If no lesion is found, the DNA wraps around the other UvrB subunit that will check the other stand for damage. This is UvrABC system protein B from Clostridium perfringens (strain SM101 / Type A).